Consider the following 52-residue polypeptide: uncharacterized protein (52 aa).

This is an uncharacterized protein from Halalkalibacterium halodurans (strain ATCC BAA-125 / DSM 18197 / FERM 7344 / JCM 9153 / C-125) (Bacillus halodurans).